The chain runs to 533 residues: MPKKKPAKHSGEDDITIPVSPQTGSSIDTWWWLTHKGTTTSFLCISLFALLIRSAVTMYPYSGAGIPPKFGDFEAQRHWMEITTNLPVIDWYRNGTYNDLTYWGLDYPPLTAYQSYIHGIFLRFFNPESVALLSSRGHESYLGKLLMRWTVLSSDAFIFFPAALFFVLVYHRNRTRGGKSEVAWHIAMILLNPCLILIDHGHFQYNCISLGLTVGAIAAVLCESEVLTCVLFSLALSHKQMSAYFAPAFFSHLLGKCLRRKSPILSVIKLGIAVIVTFVIFWWPYVHSLDDFLMVLSRLAPFERGIYEDYVANFWCTTSILIKWKNLFTTQSLKSISLAATILASLPSMVQQILSPSNEGFLYGLLNSSMAFYLFSFQVHEKSILMPFLSATLLALKLPDHFSHLTYYALFSMFPLLCRDKLLIPYLTLSFLFTVIYHSPGNHHAIQKTDVSFFSFKNFPGYVFLLRTHFFISVVLHVLYLTIKPPQKYPFLFEALIMILCFSYFIMFAFYTNYTQWTLSSHFGSSDKEKKQI.

Positions 1–20 (MPKKKPAKHSGEDDITIPVS) are disordered. 9 consecutive transmembrane segments (helical) span residues 42-64 (FLCI…YSGA), 149-169 (WTVL…FVLV), 184-204 (WHIA…GHFQ), 214-234 (VGAI…LFSL), 264-284 (ILSV…FWWP), 360-380 (GFLY…FQVH), 422-442 (LLIP…SPGN), 463-483 (VFLL…YLTI), and 491-511 (FLFE…FAFY).

This sequence belongs to the ALG6/ALG8 glucosyltransferase family.

It is found in the endoplasmic reticulum membrane. The enzyme catalyses an alpha-D-Man-(1-&gt;2)-alpha-D-Man-(1-&gt;2)-alpha-D-Man-(1-&gt;3)-[alpha-D-Man-(1-&gt;2)-alpha-D-Man-(1-&gt;3)-[alpha-D-Man-(1-&gt;2)-alpha-D-Man-(1-&gt;6)]-alpha-D-Man-(1-&gt;6)]-beta-D-Man-(1-&gt;4)-beta-D-GlcNAc-(1-&gt;4)-alpha-D-GlcNAc-diphospho-di-trans,poly-cis-dolichol + a di-trans,poly-cis-dolichyl beta-D-glucosyl phosphate = an alpha-D-Glc-(1-&gt;3)-alpha-D-Man-(1-&gt;2)-alpha-D-Man-(1-&gt;2)-alpha-D-Man-(1-&gt;3)-[alpha-D-Man-(1-&gt;2)-alpha-D-Man-(1-&gt;3)-[alpha-D-Man-(1-&gt;2)-alpha-D-Man-(1-&gt;6)]-alpha-D-Man-(1-&gt;6)]-beta-D-Man-(1-&gt;4)-beta-D-GlcNAc-(1-&gt;4)-alpha-D-GlcNAc-diphospho-di-trans,poly-cis-dolichol + a di-trans,poly-cis-dolichyl phosphate + H(+). The protein operates within protein modification; protein glycosylation. In terms of biological role, adds the first glucose residue to the lipid-linked oligosaccharide precursor for N-linked glycosylation. Transfers glucose from dolichyl phosphate glucose (Dol-P-Glc) onto the lipid-linked oligosaccharide Man(9)GlcNAc(2)-PP-Dol. The protein is Probable dolichyl pyrophosphate Man9GlcNAc2 alpha-1,3-glucosyltransferase of Arabidopsis thaliana (Mouse-ear cress).